We begin with the raw amino-acid sequence, 432 residues long: D-amino acid dehydrogenase (432 aa).

Residue 3 to 17 participates in FAD binding; the sequence is VVILGSGVVGVTSAW.

This sequence belongs to the DadA oxidoreductase family. FAD is required as a cofactor.

The catalysed reaction is a D-alpha-amino acid + A + H2O = a 2-oxocarboxylate + AH2 + NH4(+). It functions in the pathway amino-acid degradation; D-alanine degradation; NH(3) and pyruvate from D-alanine: step 1/1. In terms of biological role, oxidative deamination of D-amino acids. The protein is D-amino acid dehydrogenase of Salmonella dublin (strain CT_02021853).